The following is a 625-amino-acid chain: Very-long-chain aldehyde decarbonylase CER1 (625 aa).

Transmembrane regions (helical) follow at residues 45-65 (LGYFLVFPFLLFRILHNQVWI), 126-146 (GVLMAALIHTGPVEFLYYWLH), 177-197 (PFAEHIAYFILFAIPLLTTLL), 200-220 (TASIISFAGYIIYIDFMNNMG), and 329-349 (LLWPFTSLSMIFTLFYARLFV). One can recognise a Fatty acid hydroxylase domain in the interval 138 to 272 (VEFLYYWLHK…MPLYDYIYGT (135 aa)).

The protein belongs to the sterol desaturase family. As to quaternary structure, homodimer. Interacts with CER3, CYTB5-B, CYTB5-C, CYTB5-D and CYTB5-E. In terms of tissue distribution, expressed in seedlings, stems, leaves, flowers, fruits and siliques. Not detected in roots, pollen and seeds. Expressed in trichomes, cotyledons, shoot apical meristem and leaf primordia. Preferentially associated with young leaves rather than mature leaves. Expressed in the epidermis of the stem and caulines leaves, in the carpels and the sepals.

The protein localises to the endoplasmic reticulum membrane. It carries out the reaction a long-chain fatty aldehyde + 2 NADPH + O2 + H(+) = a long-chain alkane + formate + 2 NADP(+) + H2O. In terms of biological role, aldehyde decarbonylase involved in the conversion of aldehydes to alkanes. Core component of a very-long-chain alkane synthesis complex. Involved in epicuticular wax biosynthesis and pollen fertility. This is Very-long-chain aldehyde decarbonylase CER1 (CER1) from Arabidopsis thaliana (Mouse-ear cress).